The primary structure comprises 152 residues: Deoxyuridine 5'-triphosphate nucleotidohydrolase (152 aa).

Substrate contacts are provided by residues arginine 71–glycine 73, asparagine 84, leucine 88–aspartate 90, and methionine 98.

The protein belongs to the dUTPase family. The cofactor is Mg(2+).

The catalysed reaction is dUTP + H2O = dUMP + diphosphate + H(+). It participates in pyrimidine metabolism; dUMP biosynthesis; dUMP from dCTP (dUTP route): step 2/2. Functionally, this enzyme is involved in nucleotide metabolism: it produces dUMP, the immediate precursor of thymidine nucleotides and it decreases the intracellular concentration of dUTP so that uracil cannot be incorporated into DNA. The sequence is that of Deoxyuridine 5'-triphosphate nucleotidohydrolase from Shewanella putrefaciens (strain CN-32 / ATCC BAA-453).